A 972-amino-acid polypeptide reads, in one-letter code: Translation initiation factor IF-2 (972 aa).

Residues 49–63 show a composition bias toward basic and acidic residues; it reads HLRKSHGATDGDKRK. Disordered stretches follow at residues 49-86 and 100-383; these read HLRK…ARTI and DDVA…TFQA. The span at 105–114 shows a compositional bias: low complexity; the sequence is GAEQGQAQVA. Basic and acidic residues predominate over residues 121–177; the sequence is ELKRREEEARREAELLEKQAQELRERQERLEREEAERRAREEAAEAERRRAEEEAAA. The span at 178–209 shows a compositional bias: low complexity; sequence KRAAAAAVEAQQAAAQQAAEAQQETAGAQSAQ. Over residues 210-261 the composition is skewed to basic and acidic residues; the sequence is DEARAAAERAAQREAAKKAEDAAREAADKTRAEQEEIRKRREAAEAEARAIR. Residues 277-286 are compositionally biased toward pro residues; that stretch reads PPKPVEPPKP. The span at 298–327 shows a compositional bias: low complexity; sequence KPAGAGAARPAVKKPAGAAPATTQAPAGAG. Residues 356–369 are compositionally biased toward gly residues; the sequence is SSGGVDRGWRGGPK. A tr-type G domain is found at 472–641; sequence PRPPVVTVMG…LLQAEVLELK (170 aa). The tract at residues 481–488 is G1; sequence GHVDHGKT. 481–488 serves as a coordination point for GTP; sequence GHVDHGKT. The tract at residues 506 to 510 is G2; sequence GITQH. Residues 527–530 are G3; the sequence is DTPG. GTP-binding positions include 527–531 and 581–584; these read DTPGH and NKID. Positions 581 to 584 are G4; that stretch reads NKID. Residues 617–619 are G5; the sequence is SAK.

The protein belongs to the TRAFAC class translation factor GTPase superfamily. Classic translation factor GTPase family. IF-2 subfamily.

It is found in the cytoplasm. Functionally, one of the essential components for the initiation of protein synthesis. Protects formylmethionyl-tRNA from spontaneous hydrolysis and promotes its binding to the 30S ribosomal subunits. Also involved in the hydrolysis of GTP during the formation of the 70S ribosomal complex. This Burkholderia ambifaria (strain MC40-6) protein is Translation initiation factor IF-2.